The primary structure comprises 513 residues: 2,3-bisphosphoglycerate-independent phosphoglycerate mutase (513 aa).

Mn(2+) contacts are provided by aspartate 15 and serine 65. Serine 65 functions as the Phosphoserine intermediate in the catalytic mechanism. Residues histidine 126, 156–157 (RD), arginine 188, arginine 194, 263–266 (RADR), and lysine 337 each bind substrate. Residues aspartate 402, histidine 406, aspartate 443, histidine 444, and histidine 461 each coordinate Mn(2+).

It belongs to the BPG-independent phosphoglycerate mutase family. In terms of assembly, monomer. Mn(2+) is required as a cofactor.

It catalyses the reaction (2R)-2-phosphoglycerate = (2R)-3-phosphoglycerate. It functions in the pathway carbohydrate degradation; glycolysis; pyruvate from D-glyceraldehyde 3-phosphate: step 3/5. Catalyzes the interconversion of 2-phosphoglycerate and 3-phosphoglycerate. The sequence is that of 2,3-bisphosphoglycerate-independent phosphoglycerate mutase from Moorella thermoacetica (strain ATCC 39073 / JCM 9320).